Here is a 215-residue protein sequence, read N- to C-terminus: MDRKELQVKERTVTRKSEVKKLRTNNEIPAVLYGKNIESKKLSIEKRELLDALSTAAGDNVLLDLKLDNGESYPAIFKEIQKDPIKGFFIHIDFHTIDLKETLQVSVPLNIEGEPVGVENGGIPQYQLREIEIECLPTQIPDHIEVDVSNIDLNESINVGDLPLPEGSELVTEPEETVMSVVAPETEEEPDTEEDEEGEEDVEEESEEEEEESEE.

A disordered region spans residues 160–215 (GDLPLPEGSELVTEPEETVMSVVAPETEEEPDTEEDEEGEEDVEEESEEEEEESEE). Residues 185 to 215 (ETEEEPDTEEDEEGEEDVEEESEEEEEESEE) are compositionally biased toward acidic residues.

Belongs to the bacterial ribosomal protein bL25 family. CTC subfamily. As to quaternary structure, part of the 50S ribosomal subunit; part of the 5S rRNA/L5/L18/L25 subcomplex. Contacts the 5S rRNA. Binds to the 5S rRNA independently of L5 and L18.

Functionally, this is one of the proteins that binds to the 5S RNA in the ribosome where it forms part of the central protuberance. This Natranaerobius thermophilus (strain ATCC BAA-1301 / DSM 18059 / JW/NM-WN-LF) protein is Large ribosomal subunit protein bL25.